We begin with the raw amino-acid sequence, 352 residues long: Glycoprotein integral membrane protein 1 (352 aa).

Residues 1-25 form the signal peptide; that stretch reads MASRCKIHLTVAYLLILCILASAQS. Over 26–281 the chain is Extracellular; the sequence is KQMTTETVVL…KLRRFLSDSV (256 aa). Residues Asn-36, Asn-44, Asn-89, Asn-109, Asn-151, and Asn-197 are each glycosylated (N-linked (GlcNAc...) asparagine). The segment at 206–245 is disordered; it reads NSETTQEEIAAPGKLPETPLRMDPETLYESREEEERRSDS. The span at 225 to 244 shows a compositional bias: basic and acidic residues; that stretch reads LRMDPETLYESREEEERRSD. A helical transmembrane segment spans residues 282 to 302; sequence PLFFLVMWVVVVGVAGSAVVI. The Cytoplasmic portion of the chain corresponds to 303–352; that stretch reads KILDLIFPSCEHRGFFHLNPETLMPDDEKVSLIDNMEGDMTEKSILLIEK.

It localises to the membrane. The sequence is that of Glycoprotein integral membrane protein 1 (ginm1) from Danio rerio (Zebrafish).